The chain runs to 329 residues: DNA-directed RNA polymerase subunit alpha (329 aa).

The alpha N-terminal domain (alpha-NTD) stretch occupies residues 1 to 235 (MQNSIIGFLK…EQLEAFVDLR (235 aa)). Positions 249–329 (FEPILLRPVD…KWPPSSILEE (81 aa)) are alpha C-terminal domain (alpha-CTD).

Belongs to the RNA polymerase alpha chain family. In terms of assembly, homodimer. The RNAP catalytic core consists of 2 alpha, 1 beta, 1 beta' and 1 omega subunit. When a sigma factor is associated with the core the holoenzyme is formed, which can initiate transcription.

It carries out the reaction RNA(n) + a ribonucleoside 5'-triphosphate = RNA(n+1) + diphosphate. Its function is as follows. DNA-dependent RNA polymerase catalyzes the transcription of DNA into RNA using the four ribonucleoside triphosphates as substrates. This chain is DNA-directed RNA polymerase subunit alpha, found in Buchnera aphidicola subsp. Schizaphis graminum (strain Sg).